Consider the following 270-residue polypeptide: Tryptophan synthase alpha chain (270 aa).

Residues Glu49 and Asp60 each act as proton acceptor in the active site.

The protein belongs to the TrpA family. As to quaternary structure, tetramer of two alpha and two beta chains.

The enzyme catalyses (1S,2R)-1-C-(indol-3-yl)glycerol 3-phosphate + L-serine = D-glyceraldehyde 3-phosphate + L-tryptophan + H2O. Its pathway is amino-acid biosynthesis; L-tryptophan biosynthesis; L-tryptophan from chorismate: step 5/5. Its function is as follows. The alpha subunit is responsible for the aldol cleavage of indoleglycerol phosphate to indole and glyceraldehyde 3-phosphate. In Paraburkholderia phytofirmans (strain DSM 17436 / LMG 22146 / PsJN) (Burkholderia phytofirmans), this protein is Tryptophan synthase alpha chain.